Here is a 264-residue protein sequence, read N- to C-terminus: MKPYLELLQHVLDHGAEKSDRTGTGTRSVFGWQMRFDLNDGFPLVTTKKLHLRSIIHELLWFLKGDTNIGYLSDHQVRIWDEWADDNGDLGPVYGKQWRRWTGPDGVEIDQMQWLVDEIKRNPDSRRLVISAWNVGELPQMALMPCHSLFQFYVVNGKLSCQLYQRSGDIFLGVPFNIASYALLTHMVAQATGLGVGDFVHTLGDAHLYSNHFEQAREQLTRTPRALPSLRLNPEVTDLFAFRFEDIAIEGYDPHPAIKAPVAV.

Position 21 (arginine 21) interacts with dUMP. Position 51 (histidine 51) interacts with (6R)-5,10-methylene-5,6,7,8-tetrahydrofolate. 126-127 (RR) lines the dUMP pocket. Cysteine 146 serves as the catalytic Nucleophile. DUMP is bound by residues 166–169 (RSGD), asparagine 177, and 207–209 (HLY). (6R)-5,10-methylene-5,6,7,8-tetrahydrofolate is bound at residue aspartate 169. Alanine 263 contacts (6R)-5,10-methylene-5,6,7,8-tetrahydrofolate.

This sequence belongs to the thymidylate synthase family. Bacterial-type ThyA subfamily. In terms of assembly, homodimer.

Its subcellular location is the cytoplasm. The catalysed reaction is dUMP + (6R)-5,10-methylene-5,6,7,8-tetrahydrofolate = 7,8-dihydrofolate + dTMP. The protein operates within pyrimidine metabolism; dTTP biosynthesis. Catalyzes the reductive methylation of 2'-deoxyuridine-5'-monophosphate (dUMP) to 2'-deoxythymidine-5'-monophosphate (dTMP) while utilizing 5,10-methylenetetrahydrofolate (mTHF) as the methyl donor and reductant in the reaction, yielding dihydrofolate (DHF) as a by-product. This enzymatic reaction provides an intracellular de novo source of dTMP, an essential precursor for DNA biosynthesis. In Xanthomonas axonopodis pv. citri (strain 306), this protein is Thymidylate synthase.